The chain runs to 66 residues: Putative alpha-neurotoxin RjAa16 (66 aa).

Positions 1-60 constitute an LCN-type CS-alpha/beta domain; it reads KEGYPVDWGNCKYECMSDAYCKDLCVDRKAKSGYCYKLNWFCYCEGLPDDSPIKTNGHCR. 4 cysteine pairs are disulfide-bonded: Cys11–Cys59, Cys15–Cys35, Cys21–Cys42, and Cys25–Cys44.

This sequence belongs to the long (4 C-C) scorpion toxin superfamily. Sodium channel inhibitor family. Alpha subfamily. In terms of tissue distribution, expressed by the venom gland.

It localises to the secreted. In terms of biological role, alpha toxins bind voltage-independently at site-3 of sodium channels (Nav) and inhibits the inactivation of the activated channels, thereby blocking neuronal transmission. The chain is Putative alpha-neurotoxin RjAa16 from Rhopalurus junceus (Caribbean blue scorpion).